Reading from the N-terminus, the 90-residue chain is Small ribosomal subunit protein bS20 (90 aa).

The tract at residues 1-25 is disordered; it reads MANSAQARKRARQAAKANSHNSALR.

Belongs to the bacterial ribosomal protein bS20 family.

Binds directly to 16S ribosomal RNA. This chain is Small ribosomal subunit protein bS20, found in Burkholderia multivorans (strain ATCC 17616 / 249).